A 195-amino-acid chain; its full sequence is dCTP deaminase (195 aa).

Residues Arg-109 to Arg-114, Asp-127, Thr-135 to Glu-137, Tyr-170, Lys-177, and Gln-181 contribute to the dCTP site. Catalysis depends on Glu-137, which acts as the Proton donor/acceptor.

This sequence belongs to the dCTP deaminase family. As to quaternary structure, homotrimer.

The enzyme catalyses dCTP + H2O + H(+) = dUTP + NH4(+). It functions in the pathway pyrimidine metabolism; dUMP biosynthesis; dUMP from dCTP (dUTP route): step 1/2. Catalyzes the deamination of dCTP to dUTP. The protein is dCTP deaminase of Rhodospirillum rubrum (strain ATCC 11170 / ATH 1.1.1 / DSM 467 / LMG 4362 / NCIMB 8255 / S1).